Reading from the N-terminus, the 351-residue chain is Protein RecA (351 aa).

73-80 (GPESSGKT) serves as a coordination point for ATP.

Belongs to the RecA family.

The protein resides in the cytoplasm. Can catalyze the hydrolysis of ATP in the presence of single-stranded DNA, the ATP-dependent uptake of single-stranded DNA by duplex DNA, and the ATP-dependent hybridization of homologous single-stranded DNAs. It interacts with LexA causing its activation and leading to its autocatalytic cleavage. This Oleidesulfovibrio alaskensis (strain ATCC BAA-1058 / DSM 17464 / G20) (Desulfovibrio alaskensis) protein is Protein RecA.